The chain runs to 126 residues: Profilin (126 aa).

It belongs to the profilin family. Occurs in many kinds of cells as a complex with monomeric actin in a 1:1 ratio.

The protein localises to the cytoplasm. Its subcellular location is the cytoskeleton. Functionally, binds to actin and affects the structure of the cytoskeleton. At high concentrations, profilin prevents the polymerization of actin, whereas it enhances it at low concentrations. By binding to PIP2, it inhibits the formation of IP3 and DG. This chain is Profilin, found in Branchiostoma belcheri (Amphioxus).